A 109-amino-acid polypeptide reads, in one-letter code: DNA-binding protein MJ0691 (109 aa).

Belongs to the PDCD5 family.

The sequence is that of DNA-binding protein MJ0691 from Methanocaldococcus jannaschii (strain ATCC 43067 / DSM 2661 / JAL-1 / JCM 10045 / NBRC 100440) (Methanococcus jannaschii).